The following is a 362-amino-acid chain: Protein MGF 360-2L (362 aa).

This sequence belongs to the asfivirus MGF 360 family.

In terms of biological role, plays a role in virus cell tropism, and may be required for efficient virus replication in macrophages. This chain is Protein MGF 360-2L, found in African swine fever virus (strain Badajoz 1971 Vero-adapted) (Ba71V).